A 403-amino-acid chain; its full sequence is Flavohemoprotein (403 aa).

The 138-residue stretch at 1–138 (MLTQKTKDIV…LADVLMGMES (138 aa)) folds into the Globin domain. His85 provides a ligand contact to heme b. Active-site charge relay system residues include Tyr95 and Glu137. The segment at 149–403 (GGWKGWRTFV…EVFGPDLFAE (255 aa)) is reductase. The FAD-binding FR-type domain maps to 152 to 262 (KGWRTFVIRE…AAPYGSFHID (111 aa)). FAD-binding positions include Tyr190 and 206–209 (RQYS). 275–280 (GVGLTP) contributes to the NADP(+) binding site. 395–398 (VFGP) lines the FAD pocket.

It belongs to the globin family. Two-domain flavohemoproteins subfamily. In the C-terminal section; belongs to the flavoprotein pyridine nucleotide cytochrome reductase family. As to quaternary structure, monomer. Requires FAD as cofactor. Heme b serves as cofactor.

It localises to the cytoplasm. The enzyme catalyses 2 nitric oxide + NADPH + 2 O2 = 2 nitrate + NADP(+) + H(+). It catalyses the reaction 2 nitric oxide + NADH + 2 O2 = 2 nitrate + NAD(+) + H(+). Functionally, is involved in NO detoxification in an aerobic process, termed nitric oxide dioxygenase (NOD) reaction that utilizes O(2) and NAD(P)H to convert NO to nitrate, which protects the bacterium from various noxious nitrogen compounds. Therefore, plays a central role in the inducible response to nitrosative stress. Its function is as follows. In the presence of oxygen and NADH, FHP has NADH oxidase activity, which leads to the generation of superoxide and H(2)O(2), both in vitro and in vivo, and it has been suggested that FHP might act as an amplifier of superoxide stress. Under anaerobic conditions, FHP also exhibits nitric oxide reductase and FAD reductase activities. However, all these reactions are much lower than NOD activity. The chain is Flavohemoprotein (hmp) from Cupriavidus necator (strain ATCC 17699 / DSM 428 / KCTC 22496 / NCIMB 10442 / H16 / Stanier 337) (Ralstonia eutropha).